A 180-amino-acid chain; its full sequence is MLENDIKKVLVSHDEITEAAKKLGAQLTKDYAGKNPILVGILKGSIPFMAELVKHIDTHIEMDFMMVSSYHGGTASSGVINIKQDVTQDIKGRHVLFVEDIIDTGQTLKNLRDMFKEREAASVKIATLLDKPEGRVVEIEADYTCFTIPNEFVVGYGLDYKENYRNLPYIGVLKEEVYSN.

The diphosphate site is built by lysine 43 and glycine 44. Positions 99 and 100 each coordinate Mg(2+). Catalysis depends on aspartate 103, which acts as the Proton acceptor. GMP is bound by residues lysine 131, 152-153 (FV), and aspartate 159. Arginine 165 lines the diphosphate pocket.

Belongs to the purine/pyrimidine phosphoribosyltransferase family. The cofactor is Mg(2+).

The protein resides in the cytoplasm. The catalysed reaction is IMP + diphosphate = hypoxanthine + 5-phospho-alpha-D-ribose 1-diphosphate. It catalyses the reaction GMP + diphosphate = guanine + 5-phospho-alpha-D-ribose 1-diphosphate. It participates in purine metabolism; IMP biosynthesis via salvage pathway; IMP from hypoxanthine: step 1/1. It functions in the pathway purine metabolism; GMP biosynthesis via salvage pathway; GMP from guanine: step 1/1. Its function is as follows. Purine salvage pathway enzyme that catalyzes the transfer of the ribosyl-5-phosphate group from 5-phospho-alpha-D-ribose 1-diphosphate (PRPP) to the N9 position of the 6-oxopurines hypoxanthine and guanine to form the corresponding ribonucleotides IMP (inosine 5'-monophosphate) and GMP (guanosine 5'-monophosphate), with the release of PPi. This is Hypoxanthine-guanine phosphoribosyltransferase (hpt) from Streptococcus pneumoniae serotype 4 (strain ATCC BAA-334 / TIGR4).